We begin with the raw amino-acid sequence, 209 residues long: Dephospho-CoA kinase (209 aa).

Residues 13–209 (RIGLTGGIAT…AIEKVVVAEN (197 aa)) form the DPCK domain. ATP is bound at residue 21-26 (ATGKST).

This sequence belongs to the CoaE family.

It localises to the cytoplasm. The enzyme catalyses 3'-dephospho-CoA + ATP = ADP + CoA + H(+). The protein operates within cofactor biosynthesis; coenzyme A biosynthesis; CoA from (R)-pantothenate: step 5/5. Catalyzes the phosphorylation of the 3'-hydroxyl group of dephosphocoenzyme A to form coenzyme A. The chain is Dephospho-CoA kinase from Synechococcus elongatus (strain ATCC 33912 / PCC 7942 / FACHB-805) (Anacystis nidulans R2).